Consider the following 468-residue polypeptide: MTTKPIHVIGGGLAGSEAAWQAAEAGVPVILHEMRPVRGTDAHKTDGLAELVCSNSFRSDDAQTNAVGLLHAEMRLAGSLIMRAGDANQVPAGGALAVDRDGFSDAVTQAIHGHPLITVVREEVAGLPPSEWDQTIIATGPLTAPSLAEAIRQETGAEALAFFDAIAPIVHFDTIDMDTCWFQSRYDKAGPGGTGKDYINCPMNKEQYQAFVQALLDGEKTAFKEWEGTPYFDGCLPIEVMAERGPETLRHGPMKPMGLTNAHKPDEKAYAVVQLRQDNALGTLYNMVGFQTKLKYAEQVRIFRMIPGLENAEFARLGGLHRNTYINSPALLDITLQLKSRPGLRFAGQITGCEGYVESAAMGLMAGRFAAAARLGRKMMPPPATTAFGSLISHITGGHILSEDEPGKRSFQPMNVNFGLFPPVELPKPEGKRLRGKEKTLAKKRAITARALADCSDWLGVPTRAAAE.

10–15 contributes to the FAD binding site; it reads GGGLAG.

Belongs to the MnmG family. TrmFO subfamily. The cofactor is FAD.

The protein resides in the cytoplasm. It catalyses the reaction uridine(54) in tRNA + (6R)-5,10-methylene-5,6,7,8-tetrahydrofolate + NADH + H(+) = 5-methyluridine(54) in tRNA + (6S)-5,6,7,8-tetrahydrofolate + NAD(+). It carries out the reaction uridine(54) in tRNA + (6R)-5,10-methylene-5,6,7,8-tetrahydrofolate + NADPH + H(+) = 5-methyluridine(54) in tRNA + (6S)-5,6,7,8-tetrahydrofolate + NADP(+). Functionally, catalyzes the folate-dependent formation of 5-methyl-uridine at position 54 (M-5-U54) in all tRNAs. This chain is Methylenetetrahydrofolate--tRNA-(uracil-5-)-methyltransferase TrmFO, found in Chelativorans sp. (strain BNC1).